The following is a 312-amino-acid chain: Ribonuclease Z (312 aa).

H62, H64, D66, H67, H144, D215, and H273 together coordinate Zn(2+). Residue D66 is the Proton acceptor of the active site.

Belongs to the RNase Z family. Homodimer. It depends on Zn(2+) as a cofactor.

It catalyses the reaction Endonucleolytic cleavage of RNA, removing extra 3' nucleotides from tRNA precursor, generating 3' termini of tRNAs. A 3'-hydroxy group is left at the tRNA terminus and a 5'-phosphoryl group is left at the trailer molecule.. Its function is as follows. Zinc phosphodiesterase, which displays some tRNA 3'-processing endonuclease activity. Probably involved in tRNA maturation, by removing a 3'-trailer from precursor tRNA. The chain is Ribonuclease Z from Prochlorococcus marinus (strain MIT 9312).